The following is a 409-amino-acid chain: Casein kinase II subunit alpha-1 (409 aa).

The N-terminal stretch at 1 to 35 (MIDTLFFLFFLFFDSPLRRLLLLCAVLALRAPTAH) is a signal peptide. Residue Asn-72 is glycosylated (N-linked (GlcNAc...) asparagine). The Protein kinase domain occupies 110–395 (YEVVRKVGRG…AKEAMAHAYF (286 aa)). Residues 116–124 (VGRGKYSEV) and Lys-139 contribute to the ATP site. Asn-188 carries an N-linked (GlcNAc...) asparagine glycan. Asp-227 (proton acceptor) is an active-site residue.

The protein belongs to the protein kinase superfamily. Ser/Thr protein kinase family. CK2 subfamily. As to quaternary structure, heterotetramer of two catalytic alpha subunits and two regulatory beta subunits. In terms of tissue distribution, seems to be present in all plant organs. But seems to be less expressed than CKA2.

The protein resides in the nucleus. Its subcellular location is the nucleolus. It catalyses the reaction L-seryl-[protein] + ATP = O-phospho-L-seryl-[protein] + ADP + H(+). The catalysed reaction is L-threonyl-[protein] + ATP = O-phospho-L-threonyl-[protein] + ADP + H(+). Inhibited by heparin. Casein kinases are operationally defined by their preferential utilization of acidic proteins such as caseins as substrates. Phosphorylates casein in vitro. The alpha chain contains the catalytic site. The tetrameric holoenzyme CK2, composed of two alpha and two beta subunits, phosphorylates the transcription factor GBFl, resulting in stimulation of its DNA binding activity. CK2 phosphorylates the transcription factor PIF1 after an exposure to light, resulting in a proteasome-dependent degradation of PIF1 and promotion of photomorphogenesis. CK2 phosphorylates translation initiation factors. May participate in the regulation of the initiation of translation. Acts as a circadian clock component that maintains the correct period length through phosphorylation of CCA1. Required for the maintenance and control of genomic stability and chromatin structure. May act as an ectokinase that phosphorylates several extracellular proteins. This is Casein kinase II subunit alpha-1 from Arabidopsis thaliana (Mouse-ear cress).